The sequence spans 146 residues: Large ribosomal subunit protein uL15 (146 aa).

The interval 1–57 is disordered; that stretch reads MDLSNLKAAEGSVHSDNFRRGRGHGSGNGKTAGKGHKGQKARSGAPRPGFEGGQMPL.

Belongs to the universal ribosomal protein uL15 family. Part of the 50S ribosomal subunit.

In terms of biological role, binds to the 23S rRNA. This is Large ribosomal subunit protein uL15 from Agathobacter rectalis (strain ATCC 33656 / DSM 3377 / JCM 17463 / KCTC 5835 / VPI 0990) (Eubacterium rectale).